The primary structure comprises 218 residues: Superoxide dismutase [Mn], mitochondrial (218 aa).

A mitochondrion-targeting transit peptide spans 1 to 21 (MLRFLSKNSVAAIRNVSIARG). His-50 and His-96 together coordinate Mn(2+). Ser-129 carries the phosphoserine modification. Residues Asp-181 and His-185 each coordinate Mn(2+).

The protein belongs to the iron/manganese superoxide dismutase family. Homodimer. The cofactor is Mn(2+).

The protein localises to the mitochondrion matrix. It carries out the reaction 2 superoxide + 2 H(+) = H2O2 + O2. Destroys superoxide anion radicals which are normally produced within the cells and which are toxic to biological systems. The chain is Superoxide dismutase [Mn], mitochondrial (sod2) from Schizosaccharomyces pombe (strain 972 / ATCC 24843) (Fission yeast).